Reading from the N-terminus, the 344-residue chain is Meiotically up-regulated gene 10 protein (344 aa).

Residues 48–207 (EFNSILQEII…RELCSYIDQE (160 aa)) form the DH domain.

Its subcellular location is the cytoplasm. The protein localises to the nucleus. In terms of biological role, has a role in meiosis. The polypeptide is Meiotically up-regulated gene 10 protein (mug10) (Schizosaccharomyces pombe (strain 972 / ATCC 24843) (Fission yeast)).